The sequence spans 149 residues: Calmodulin (149 aa).

4 EF-hand domains span residues 8 to 43 (EQIS…LGQN), 44 to 79 (PTEA…KMQD), 81 to 116 (DSEE…LGEK), and 117 to 149 (LTDE…MMSK). The Ca(2+) site is built by Asp21, Asp23, Asp25, Thr27, Glu32, Asp57, Asp59, Ser61, Thr63, Glu68, Asp94, Asp96, Asn98, and Glu105. Lys116 carries the post-translational modification N6,N6,N6-trimethyllysine. Residues Asp130, Asp132, Asp134, Gln136, and Glu141 each contribute to the Ca(2+) site.

Belongs to the calmodulin family.

Its function is as follows. Calmodulin mediates the control of a large number of enzymes, ion channels and other proteins by Ca(2+). Among the enzymes to be stimulated by the calmodulin-Ca(2+) complex are a number of protein kinases and phosphatases. The sequence is that of Calmodulin from Trypanosoma brucei brucei.